The sequence spans 114 residues: Flagellar hook-basal body complex protein FliE (114 aa).

The protein belongs to the FliE family.

The protein localises to the bacterial flagellum basal body. This chain is Flagellar hook-basal body complex protein FliE, found in Burkholderia lata (strain ATCC 17760 / DSM 23089 / LMG 22485 / NCIMB 9086 / R18194 / 383).